The sequence spans 366 residues: D-alanine--D-alanine ligase (366 aa).

One can recognise an ATP-grasp domain in the interval 146-352 (KICFEHAGLQ…YTELINRLIE (207 aa)). Residue 179 to 234 (EKKLRYPMFVKPANMGSSVGISKAHNRNELIEAIELALAYDRKFLIEKAINAREME) coordinates ATP. Asp305, Glu319, and Asn321 together coordinate Mg(2+).

Belongs to the D-alanine--D-alanine ligase family. Mg(2+) is required as a cofactor. The cofactor is Mn(2+).

The protein resides in the cytoplasm. It carries out the reaction 2 D-alanine + ATP = D-alanyl-D-alanine + ADP + phosphate + H(+). The protein operates within cell wall biogenesis; peptidoglycan biosynthesis. Its function is as follows. Cell wall formation. The sequence is that of D-alanine--D-alanine ligase from Chloroherpeton thalassium (strain ATCC 35110 / GB-78).